Here is a 103-residue protein sequence, read N- to C-terminus: Integration host factor subunit beta (103 aa).

The disordered stretch occupies residues Arg59–Pro82.

This sequence belongs to the bacterial histone-like protein family. As to quaternary structure, heterodimer of an alpha and a beta chain.

This protein is one of the two subunits of integration host factor, a specific DNA-binding protein that functions in genetic recombination as well as in transcriptional and translational control. The chain is Integration host factor subunit beta from Xanthomonas oryzae pv. oryzae (strain MAFF 311018).